A 421-amino-acid chain; its full sequence is 3-hydroxy-3-methylglutaryl-coenzyme A reductase (421 aa).

Active-site charge relay system residues include E109, K240, and D315. Residue H410 is the Proton donor of the active site.

This sequence belongs to the HMG-CoA reductase family.

The catalysed reaction is (R)-mevalonate + 2 NADP(+) + CoA = (3S)-3-hydroxy-3-methylglutaryl-CoA + 2 NADPH + 2 H(+). It participates in metabolic intermediate biosynthesis; (R)-mevalonate biosynthesis; (R)-mevalonate from acetyl-CoA: step 3/3. Its function is as follows. Converts HMG-CoA to mevalonate. The chain is 3-hydroxy-3-methylglutaryl-coenzyme A reductase (hmgA) from Aeropyrum pernix (strain ATCC 700893 / DSM 11879 / JCM 9820 / NBRC 100138 / K1).